The chain runs to 513 residues: ATP synthase subunit alpha (513 aa).

169 to 176 (GDRQTGKT) is a binding site for ATP.

The protein belongs to the ATPase alpha/beta chains family. In terms of assembly, F-type ATPases have 2 components, CF(1) - the catalytic core - and CF(0) - the membrane proton channel. CF(1) has five subunits: alpha(3), beta(3), gamma(1), delta(1), epsilon(1). CF(0) has three main subunits: a(1), b(2) and c(9-12). The alpha and beta chains form an alternating ring which encloses part of the gamma chain. CF(1) is attached to CF(0) by a central stalk formed by the gamma and epsilon chains, while a peripheral stalk is formed by the delta and b chains.

The protein resides in the cell inner membrane. It carries out the reaction ATP + H2O + 4 H(+)(in) = ADP + phosphate + 5 H(+)(out). Produces ATP from ADP in the presence of a proton gradient across the membrane. The alpha chain is a regulatory subunit. The sequence is that of ATP synthase subunit alpha from Glaesserella parasuis serovar 5 (strain SH0165) (Haemophilus parasuis).